The chain runs to 288 residues: Probable endonuclease 4 (288 aa).

Positions 75, 115, 153, 187, 190, 224, 237, 239, and 269 each coordinate Zn(2+).

Belongs to the AP endonuclease 2 family. Zn(2+) is required as a cofactor.

The catalysed reaction is Endonucleolytic cleavage to 5'-phosphooligonucleotide end-products.. Endonuclease IV plays a role in DNA repair. It cleaves phosphodiester bonds at apurinic or apyrimidinic (AP) sites, generating a 3'-hydroxyl group and a 5'-terminal sugar phosphate. This is Probable endonuclease 4 from Chlamydia muridarum (strain MoPn / Nigg).